A 440-amino-acid polypeptide reads, in one-letter code: Probable D-serine dehydratase (440 aa).

Lysine 111 carries the post-translational modification N6-(pyridoxal phosphate)lysine.

Belongs to the serine/threonine dehydratase family. DsdA subfamily. Requires pyridoxal 5'-phosphate as cofactor.

It catalyses the reaction D-serine = pyruvate + NH4(+). This chain is Probable D-serine dehydratase, found in Rhizobium leguminosarum bv. trifolii (strain WSM2304).